The sequence spans 737 residues: Prospero homeobox protein 1 (737 aa).

An interaction with RORG region spans residues 1 to 28 (MPDHDSTALLSRQTKRRRVDIGVKRTVG). A compositionally biased stretch (polar residues) spans 103 to 135 (KNGGTEPSFQASGLSSTGSEVHQEDICSNSSRD). Residues 103 to 149 (KNGGTEPSFQASGLSSTGSEVHQEDICSNSSRDSPPECLSPFGRPTM) form a disordered region. S177, S179, and S199 each carry phosphoserine. Residues 178 to 242 (HSPSVALRGN…REERRQLKQQ (65 aa)) are disordered. The segment covering 213–223 (LPQQQQQSFQQ) has biased composition (low complexity). The span at 227–242 (ARKEQKREERRQLKQQ) shows a compositional bias: basic and acidic residues. Phosphoserine occurs at positions 291 and 295. A compositionally biased stretch (basic and acidic residues) spans 320–337 (MAENKPKREGNNKERDHG). Disordered stretches follow at residues 320–344 (MAEN…LQPE) and 445–476 (KNSS…TGFT). K324 is covalently cross-linked (Glycyl lysine isopeptide (Lys-Gly) (interchain with G-Cter in SUMO2)). Residues 464–476 (LHQSPLSATTGFT) are compositionally biased toward polar residues. A phosphoserine mark is found at S511, S514, and S557. A Prospero-type homeo domain is found at 577-635 (QEGLSPNHLKKAKLMFFYTRYPSSNMLKTYFSDVKFNRCITSQLIKWFSNFREFYYIQM). The segment at 577–735 (QEGLSPNHLK…KSPNCLQELL (159 aa)) is homeo-Prospero. The Prospero domain occupies 636–735 (EKYARQAIND…KSPNCLQELL (100 aa)). Positions 723-729 (EIFKSPN) are essential for nuclear localization, interaction with RORG, repression of RORG transcriptional activator activity.

Belongs to the Prospero homeodomain family. In terms of assembly, interacts with RORA and RORG (via AF-2 motif). As to expression, most actively expressed in the developing lens. Detected also in embryonic brain, lung, liver and kidney. In adult, it is more abundant in heart and liver than in brain, skeletal muscle, kidney and pancreas.

It is found in the nucleus. Functionally, transcription factor involved in developmental processes such as cell fate determination, gene transcriptional regulation and progenitor cell regulation in a number of organs. Plays a critical role in embryonic development and functions as a key regulatory protein in neurogenesis and the development of the heart, eye lens, liver, pancreas and the lymphatic system. Involved in the regulation of the circadian rhythm. Represses: transcription of the retinoid-related orphan receptor RORG, transcriptional activator activity of RORA and RORG and the expression of RORA/G-target genes including core clock components: BMAL1, NPAS2 and CRY1 and metabolic genes: AVPR1A and ELOVL3. This Homo sapiens (Human) protein is Prospero homeobox protein 1 (PROX1).